The primary structure comprises 198 residues: Phycocyanobilin lyase CpcT homolog (198 aa).

Belongs to the CpcT/CpeT biliprotein lyase family.

Covalently attaches a chromophore to Cys residue(s) of phycobiliproteins. In vitro is not seen to act as a chromophore lyase for ApcA1, ApcA2, ApcB, ApcD, ApcF, CpcB or PecB, the lyase activity is therefore unsure. This Nostoc sp. (strain PCC 7120 / SAG 25.82 / UTEX 2576) protein is Phycocyanobilin lyase CpcT homolog (cpcT2).